A 532-amino-acid chain; its full sequence is Berberine bridge enzyme-like 18 (532 aa).

Residues 1–29 (MKFQSFFSSVLIFFTTSTLLLSIPHPVSA) form the signal peptide. N-linked (GlcNAc...) asparagine glycans are attached at residues Asn30, Asn33, Asn46, Asn59, Asn147, Asn169, and Asn262. The cysteines at positions 40 and 102 are disulfide-linked. The FAD-binding PCMH-type domain occupies 80–254 (DVPKPVLILT…LSWKIGLINV (175 aa)). The segment at residues 117-179 (HDYEGLSYVT…RTLAFPAGVC (63 aa)) is a cross-link (6-(S-cysteinyl)-8alpha-(pros-histidyl)-FAD (His-Cys)).

The protein belongs to the oxygen-dependent FAD-linked oxidoreductase family. The cofactor is FAD. In terms of processing, the FAD cofactor is bound via a bicovalent 6-S-cysteinyl, 8alpha-N1-histidyl FAD linkage.

The protein localises to the secreted. It is found in the cell wall. The sequence is that of Berberine bridge enzyme-like 18 from Arabidopsis thaliana (Mouse-ear cress).